The sequence spans 793 residues: Endonuclease MutS2 (793 aa).

Glycine 329 to threonine 336 serves as a coordination point for ATP. The segment at leucine 611–proline 639 is disordered. The segment covering glutamate 623–proline 639 has biased composition (basic and acidic residues). The region spanning valine 717–arginine 792 is the Smr domain.

Belongs to the DNA mismatch repair MutS family. MutS2 subfamily. Homodimer. Binds to stalled ribosomes, contacting rRNA.

Functionally, endonuclease that is involved in the suppression of homologous recombination and thus may have a key role in the control of bacterial genetic diversity. In terms of biological role, acts as a ribosome collision sensor, splitting the ribosome into its 2 subunits. Detects stalled/collided 70S ribosomes which it binds and splits by an ATP-hydrolysis driven conformational change. Acts upstream of the ribosome quality control system (RQC), a ribosome-associated complex that mediates the extraction of incompletely synthesized nascent chains from stalled ribosomes and their subsequent degradation. Probably generates substrates for RQC. The protein is Endonuclease MutS2 of Symbiobacterium thermophilum (strain DSM 24528 / JCM 14929 / IAM 14863 / T).